The sequence spans 637 residues: Threonine--tRNA ligase (637 aa).

One can recognise a TGS domain in the interval 1-61; sequence MLNITLPDCS…VEDSAVQIIT (61 aa). Positions 242–533 are catalytic; that stretch reads DHRKLGKQLD…LIENHAGSFP (292 aa). Cysteine 333, histidine 384, and histidine 510 together coordinate Zn(2+).

It belongs to the class-II aminoacyl-tRNA synthetase family. Homodimer. Requires Zn(2+) as cofactor.

It localises to the cytoplasm. It carries out the reaction tRNA(Thr) + L-threonine + ATP = L-threonyl-tRNA(Thr) + AMP + diphosphate + H(+). In terms of biological role, catalyzes the attachment of threonine to tRNA(Thr) in a two-step reaction: L-threonine is first activated by ATP to form Thr-AMP and then transferred to the acceptor end of tRNA(Thr). Also edits incorrectly charged L-seryl-tRNA(Thr). The chain is Threonine--tRNA ligase from Neisseria gonorrhoeae (strain ATCC 700825 / FA 1090).